The primary structure comprises 456 residues: Adenylosuccinate lyase (456 aa).

N(6)-(1,2-dicarboxyethyl)-AMP-binding positions include 15–16 (RY), 90–92 (NHD), and 122–123 (TS). The Proton donor/acceptor role is filled by His171. Gln247 contributes to the N(6)-(1,2-dicarboxyethyl)-AMP binding site. Ser295 (proton donor/acceptor) is an active-site residue. Residues Ser296, 301 to 303 (KVN), Asn309, Arg335, and 340 to 344 (STVLR) contribute to the N(6)-(1,2-dicarboxyethyl)-AMP site.

It belongs to the lyase 1 family. Adenylosuccinate lyase subfamily. As to quaternary structure, homotetramer. Residues from neighboring subunits contribute catalytic and substrate-binding residues to each active site.

It carries out the reaction N(6)-(1,2-dicarboxyethyl)-AMP = fumarate + AMP. It catalyses the reaction (2S)-2-[5-amino-1-(5-phospho-beta-D-ribosyl)imidazole-4-carboxamido]succinate = 5-amino-1-(5-phospho-beta-D-ribosyl)imidazole-4-carboxamide + fumarate. The protein operates within purine metabolism; AMP biosynthesis via de novo pathway; AMP from IMP: step 2/2. It participates in purine metabolism; IMP biosynthesis via de novo pathway; 5-amino-1-(5-phospho-D-ribosyl)imidazole-4-carboxamide from 5-amino-1-(5-phospho-D-ribosyl)imidazole-4-carboxylate: step 2/2. Functionally, catalyzes two reactions in de novo purine nucleotide biosynthesis. Catalyzes the breakdown of 5-aminoimidazole- (N-succinylocarboxamide) ribotide (SAICAR or 2-[5-amino-1-(5-phospho-beta-D-ribosyl)imidazole-4-carboxamido]succinate) to 5-aminoimidazole-4-carboxamide ribotide (AICAR or 5-amino-1-(5-phospho-beta-D-ribosyl)imidazole-4-carboxamide) and fumarate, and of adenylosuccinate (ADS or N(6)-(1,2-dicarboxyethyl)-AMP) to adenosine monophosphate (AMP) and fumarate. The protein is Adenylosuccinate lyase (purB) of Legionella pneumophila subsp. pneumophila (strain Philadelphia 1 / ATCC 33152 / DSM 7513).